The chain runs to 363 residues: Fructose-bisphosphate aldolase C (363 aa).

Arginine 56 and lysine 147 together coordinate substrate. The Schiff-base intermediate with dihydroxyacetone-P role is filled by lysine 230.

This sequence belongs to the class I fructose-bisphosphate aldolase family. In terms of assembly, homotetramer. In terms of tissue distribution, expressed in brain but not in liver or muscle.

It carries out the reaction beta-D-fructose 1,6-bisphosphate = D-glyceraldehyde 3-phosphate + dihydroxyacetone phosphate. The protein operates within carbohydrate degradation; glycolysis; D-glyceraldehyde 3-phosphate and glycerone phosphate from D-glucose: step 4/4. The protein is Fructose-bisphosphate aldolase C (aldoc) of Carassius auratus (Goldfish).